Consider the following 291-residue polypeptide: Aliphatic sulfonates import ATP-binding protein SsuB 2 (291 aa).

In terms of domain architecture, ABC transporter spans 26–247 (LRVRGIAKRY…APGLPALASI (222 aa)). Residue 58–65 (GRSGCGKS) coordinates ATP. The disordered stretch occupies residues 264 to 291 (PAAPKAQTRHGPPRGATAQDTSPLQRIL). Over residues 281–291 (AQDTSPLQRIL) the composition is skewed to polar residues.

It belongs to the ABC transporter superfamily. Aliphatic sulfonates importer (TC 3.A.1.17.2) family. The complex is composed of two ATP-binding proteins (SsuB), two transmembrane proteins (SsuC) and a solute-binding protein (SsuA).

It localises to the cell inner membrane. It catalyses the reaction ATP + H2O + aliphatic sulfonate-[sulfonate-binding protein]Side 1 = ADP + phosphate + aliphatic sulfonateSide 2 + [sulfonate-binding protein]Side 1.. Part of the ABC transporter complex SsuABC involved in aliphatic sulfonates import. Responsible for energy coupling to the transport system. This is Aliphatic sulfonates import ATP-binding protein SsuB 2 from Xanthomonas axonopodis pv. citri (strain 306).